The following is a 129-amino-acid chain: Glycine cleavage system H protein (129 aa).

Residues 24 to 106 enclose the Lipoyl-binding domain; sequence SYTVGISEHA…YGDGWFFRIM (83 aa). Position 65 is an N6-lipoyllysine (Lys65).

It belongs to the GcvH family. In terms of assembly, the glycine cleavage system is composed of four proteins: P, T, L and H. It depends on (R)-lipoate as a cofactor.

In terms of biological role, the glycine cleavage system catalyzes the degradation of glycine. The H protein shuttles the methylamine group of glycine from the P protein to the T protein. This chain is Glycine cleavage system H protein, found in Shewanella loihica (strain ATCC BAA-1088 / PV-4).